The sequence spans 575 residues: Proline--tRNA ligase (575 aa).

Belongs to the class-II aminoacyl-tRNA synthetase family. ProS type 1 subfamily. Homodimer.

The protein resides in the cytoplasm. It catalyses the reaction tRNA(Pro) + L-proline + ATP = L-prolyl-tRNA(Pro) + AMP + diphosphate. Its function is as follows. Catalyzes the attachment of proline to tRNA(Pro) in a two-step reaction: proline is first activated by ATP to form Pro-AMP and then transferred to the acceptor end of tRNA(Pro). As ProRS can inadvertently accommodate and process non-cognate amino acids such as alanine and cysteine, to avoid such errors it has two additional distinct editing activities against alanine. One activity is designated as 'pretransfer' editing and involves the tRNA(Pro)-independent hydrolysis of activated Ala-AMP. The other activity is designated 'posttransfer' editing and involves deacylation of mischarged Ala-tRNA(Pro). The misacylated Cys-tRNA(Pro) is not edited by ProRS. The sequence is that of Proline--tRNA ligase from Anaeromyxobacter sp. (strain Fw109-5).